The chain runs to 370 residues: UDP-N-acetylglucosamine--N-acetylmuramyl-(pentapeptide) pyrophosphoryl-undecaprenol N-acetylglucosamine transferase (370 aa).

UDP-N-acetyl-alpha-D-glucosamine is bound by residues 20–22 (TAG), Asn134, Arg170, Ser204, Ile257, and Gln301.

This sequence belongs to the glycosyltransferase 28 family. MurG subfamily.

It is found in the cell membrane. It carries out the reaction di-trans,octa-cis-undecaprenyl diphospho-N-acetyl-alpha-D-muramoyl-L-alanyl-D-glutamyl-meso-2,6-diaminopimeloyl-D-alanyl-D-alanine + UDP-N-acetyl-alpha-D-glucosamine = di-trans,octa-cis-undecaprenyl diphospho-[N-acetyl-alpha-D-glucosaminyl-(1-&gt;4)]-N-acetyl-alpha-D-muramoyl-L-alanyl-D-glutamyl-meso-2,6-diaminopimeloyl-D-alanyl-D-alanine + UDP + H(+). Its pathway is cell wall biogenesis; peptidoglycan biosynthesis. Cell wall formation. Catalyzes the transfer of a GlcNAc subunit on undecaprenyl-pyrophosphoryl-MurNAc-pentapeptide (lipid intermediate I) to form undecaprenyl-pyrophosphoryl-MurNAc-(pentapeptide)GlcNAc (lipid intermediate II). This Corynebacterium jeikeium (strain K411) protein is UDP-N-acetylglucosamine--N-acetylmuramyl-(pentapeptide) pyrophosphoryl-undecaprenol N-acetylglucosamine transferase.